A 455-amino-acid polypeptide reads, in one-letter code: Glutamyl-tRNA reductase (455 aa).

Residues 49–52 (TCNR), serine 109, 114–116 (ETQ), and glutamine 120 contribute to the substrate site. Catalysis depends on cysteine 50, which acts as the Nucleophile. An NADP(+)-binding site is contributed by 189–194 (GAGKMG).

It belongs to the glutamyl-tRNA reductase family. As to quaternary structure, homodimer.

The enzyme catalyses (S)-4-amino-5-oxopentanoate + tRNA(Glu) + NADP(+) = L-glutamyl-tRNA(Glu) + NADPH + H(+). It participates in porphyrin-containing compound metabolism; protoporphyrin-IX biosynthesis; 5-aminolevulinate from L-glutamyl-tRNA(Glu): step 1/2. Functionally, catalyzes the NADPH-dependent reduction of glutamyl-tRNA(Glu) to glutamate 1-semialdehyde (GSA). This Geobacillus thermodenitrificans (strain NG80-2) protein is Glutamyl-tRNA reductase.